The sequence spans 428 residues: Serine--tRNA ligase (428 aa).

Threonine 231 to glutamate 233 contributes to the L-serine binding site. ATP contacts are provided by residues arginine 262–glutamate 264 and valine 278. An L-serine-binding site is contributed by glutamate 285. Residue glutamate 349–serine 352 coordinates ATP. Threonine 384 is an L-serine binding site.

It belongs to the class-II aminoacyl-tRNA synthetase family. Type-1 seryl-tRNA synthetase subfamily. Homodimer. The tRNA molecule binds across the dimer.

It localises to the cytoplasm. It carries out the reaction tRNA(Ser) + L-serine + ATP = L-seryl-tRNA(Ser) + AMP + diphosphate + H(+). The enzyme catalyses tRNA(Sec) + L-serine + ATP = L-seryl-tRNA(Sec) + AMP + diphosphate + H(+). The protein operates within aminoacyl-tRNA biosynthesis; selenocysteinyl-tRNA(Sec) biosynthesis; L-seryl-tRNA(Sec) from L-serine and tRNA(Sec): step 1/1. Catalyzes the attachment of serine to tRNA(Ser). Is also able to aminoacylate tRNA(Sec) with serine, to form the misacylated tRNA L-seryl-tRNA(Sec), which will be further converted into selenocysteinyl-tRNA(Sec). The polypeptide is Serine--tRNA ligase (Bifidobacterium longum (strain NCC 2705)).